The chain runs to 669 residues: Probable pectinesterase/pectinesterase inhibitor 21 (669 aa).

A helical membrane pass occupies residues 16–36 (IVITISSVLLISMVVAVTVGV). N-linked (GlcNAc...) asparagine glycans are attached at residues asparagine 52, asparagine 81, asparagine 94, asparagine 281, and asparagine 300. Positions 52-205 (NASVKAVKDV…IELTHNGLAI (154 aa)) are pectinesterase inhibitor 21. Residues 255–551 (DIVVAQDGSG…FTPAQYIQGD (297 aa)) form a pectinesterase 21 region. Positions 330 and 360 each coordinate substrate. The Proton donor; for pectinesterase activity role is filled by aspartate 383. Cysteine 397 and cysteine 417 are oxidised to a cystine. Catalysis depends on aspartate 404, which acts as the Nucleophile; for pectinesterase activity. An N-linked (GlcNAc...) asparagine glycan is attached at asparagine 416. 2 residues coordinate substrate: arginine 472 and tryptophan 474. The disordered stretch occupies residues 615–669 (AYTGTASPESSIKVSSSTETASPESSFTEASTASPESSIMVASTESSGSFFSMFT). A compositionally biased stretch (polar residues) spans 616-628 (YTGTASPESSIKV). A compositionally biased stretch (low complexity) spans 629–652 (SSSTETASPESSFTEASTASPESS). Over residues 654 to 669 (MVASTESSGSFFSMFT) the composition is skewed to polar residues.

In the N-terminal section; belongs to the PMEI family. This sequence in the C-terminal section; belongs to the pectinesterase family. In terms of tissue distribution, expressed in flower buds.

It is found in the membrane. It catalyses the reaction [(1-&gt;4)-alpha-D-galacturonosyl methyl ester](n) + n H2O = [(1-&gt;4)-alpha-D-galacturonosyl](n) + n methanol + n H(+). It participates in glycan metabolism; pectin degradation; 2-dehydro-3-deoxy-D-gluconate from pectin: step 1/5. Acts in the modification of cell walls via demethylesterification of cell wall pectin. This Arabidopsis thaliana (Mouse-ear cress) protein is Probable pectinesterase/pectinesterase inhibitor 21 (PME21).